Reading from the N-terminus, the 1037-residue chain is Presequence protease, mitochondrial (1037 aa).

The N-terminal 15 residues, 1-15 (MWRCGGRQGLGVLRR), are a transit peptide targeting the mitochondrion. His104 is a binding site for Zn(2+). Residue Glu107 is the Proton acceptor of the active site. His108 and Glu205 together coordinate Zn(2+). The cysteines at positions 119 and 556 are disulfide-linked. An N6-acetyllysine modification is found at Lys759. An N6-acetyllysine; alternate modification is found at Lys770. Residue Lys770 is modified to N6-succinyllysine; alternate. The segment at 803 to 834 (IGRSKKERRPVRPHTVEKPVPSSSGGDAHVPH) is disordered. Residues 804-814 (GRSKKERRPVR) are compositionally biased toward basic residues. Lys849 is subject to N6-succinyllysine. The residue at position 884 (Lys884) is an N6-acetyllysine. Lys946 bears the N6-succinyllysine mark.

It belongs to the peptidase M16 family. PreP subfamily. In terms of assembly, monomer and homodimer; homodimerization is induced by binding of the substrate. It depends on Zn(2+) as a cofactor. A disulfide bond locks the enzyme in the closed conformation preventing substrate entry into the catalytic chamber.

The protein resides in the mitochondrion matrix. Mainly exists in a closed and catalytically competent conformation but a closed-to-open switch allows substrate entry into the catalytic chamber. Substrate binding induces closure and dimerization. A disulfide bond may lock the enzyme in a closed conformation preventing substrate entry into the catalytic chamber, participating in redox regulation of the enzyme. Inhibited by metal-chelating agents. Inhibited by nickel and zinc excess, and slightly activated by manganese. Metalloendopeptidase of the mitochondrial matrix that functions in peptide cleavage and degradation rather than in protein processing. Has an ATP-independent activity. Specifically cleaves peptides in the range of 5 to 65 residues. Shows a preference for cleavage after small polar residues and before basic residues, but without any positional preference. Degrades the transit peptides of mitochondrial proteins after their cleavage. Also degrades other unstructured peptides. It is also able to degrade amyloid-beta protein 40, one of the peptides produced by APP processing, when it accumulates in mitochondrion. It is a highly efficient protease, at least toward amyloid-beta protein 40. Cleaves that peptide at a specific position and is probably not processive, releasing digested peptides intermediates that can be further cleaved subsequently. It is also able to degrade amyloid-beta protein 42. The polypeptide is Presequence protease, mitochondrial (Pongo abelii (Sumatran orangutan)).